Reading from the N-terminus, the 647-residue chain is Versicolorin B synthase (647 aa).

Residues 1 to 26 form the signal peptide; that stretch reads MALSTILTAAAMPVAGLFAFAQQSSA. FAD-binding positions include 85–86 and 106–107; these read TA and EA. The N-linked (GlcNAc...) asparagine glycan is linked to N117. 172–175 serves as a coordination point for FAD; the sequence is GAML. 2 N-linked (GlcNAc...) asparagine glycosylation sites follow: N222 and N509. FAD contacts are provided by residues A617 and 628–629; that span reads PM.

The protein belongs to the GMC oxidoreductase family. In terms of assembly, homodimer. Requires FAD as cofactor.

The protein resides in the cytoplasm. It localises to the cytosol. It carries out the reaction (2S-3S)-versiconal hemiacetal = versicolorin B + H2O. It catalyses the reaction (S)-5'-oxoaverantin + H(+) = (1'S,5'S)-averufin + H2O. It functions in the pathway mycotoxin biosynthesis. Functionally, versicolorin B synthase; part of the fragmented gene cluster that mediates the biosynthesis of dothistromin (DOTH), a polyketide toxin very similar in structure to the aflatoxin precursor, versicolorin B. The first step of the pathway is the conversion of acetate to norsolorinic acid (NOR) and requires the fatty acid synthase subunits hexA and hexB, as well as the polyketide synthase pksA. PksA combines a hexanoyl starter unit and 7 malonyl-CoA extender units to synthesize the precursor NOR. The hexanoyl starter unit is provided to the acyl-carrier protein (ACP) domain by the fungal fatty acid synthase hexA/hexB. The second step is the conversion of NOR to averantin (AVN) and requires the norsolorinic acid ketoreductase nor1, which catalyzes the dehydration of norsolorinic acid to form (1'S)-averantin. The cytochrome P450 monooxygenase avnA then catalyzes the hydroxylation of AVN to 5'hydroxyaverantin (HAVN). The next step is performed by adhA that transforms HAVN to averufin (AVF). Averufin might then be converted to hydroxyversicolorone by cypX and avfA. Hydroxyversicolorone is further converted versiconal hemiacetal acetate (VHA) by moxY. VHA is then the substrate for the versiconal hemiacetal acetate esterase est1 to yield versiconal (VAL). Versicolorin B synthase vbsA then converts VAL to versicolorin B (VERB) by closing the bisfuran ring. Then, the activity of the versicolorin B desaturase verB leads to versicolorin A (VERA). DotB, a predicted chloroperoxidase, may perform epoxidation of the A-ring of VERA. Alternatively, a cytochrome P450, such as cypX or avnA could catalyze this step. It is also possible that another, uncharacterized, cytochrome P450 enzyme is responsible for this step. Opening of the epoxide could potentially be achieved by the epoxide hydrolase epoA. However, epoA seems not to be required for DOTH biosynthesis, but other epoxide hydrolases may have the ability to complement this hydrolysis. Alternatively, opening of the epoxide ring could be achieved non-enzymatically. The next step is the deoxygenation of ring A to yield the 5,8-dihydroxyanthraquinone which is most likely catalyzed by the NADPH dehydrogenase encoded by ver1. The last stages of DOTH biosynthesis are proposed to involve hydroxylation of the bisfuran. OrdB and norB might have oxidative roles here. An alternative possibility is that cytochrome P450 monoogenases such as avnA and cypX might perform these steps in addition to previously proposed steps. This Dothistroma septosporum (Red band needle blight fungus) protein is Versicolorin B synthase.